Here is a 304-residue protein sequence, read N- to C-terminus: C-type lectin domain-containing protein 141 (304 aa).

An N-terminal signal peptide occupies residues 1–19 (MRSSSTLLIAFGLFLASMS). The segment at 29 to 100 (GSGGHRPPSS…TTPEPTTTKV (72 aa)) is disordered. The span at 51 to 99 (TKPPKSTSTPSTSTSTPTTTTTTTTTTTTTPTTTTTTTTTTTPEPTTTK) shows a compositional bias: low complexity.

This Caenorhabditis elegans protein is C-type lectin domain-containing protein 141 (clec-141).